Reading from the N-terminus, the 240-residue chain is tRNA (guanine-N(7)-)-methyltransferase (240 aa).

Glu70, Glu95, Asp122, and Asp145 together coordinate S-adenosyl-L-methionine. Asp145 is a catalytic residue. Substrate-binding positions include Lys149, Asp181, and 218-221; that span reads TKFE.

Belongs to the class I-like SAM-binding methyltransferase superfamily. TrmB family.

It catalyses the reaction guanosine(46) in tRNA + S-adenosyl-L-methionine = N(7)-methylguanosine(46) in tRNA + S-adenosyl-L-homocysteine. Its pathway is tRNA modification; N(7)-methylguanine-tRNA biosynthesis. Catalyzes the formation of N(7)-methylguanine at position 46 (m7G46) in tRNA. In Pseudomonas entomophila (strain L48), this protein is tRNA (guanine-N(7)-)-methyltransferase.